The following is a 759-amino-acid chain: LON peptidase N-terminal domain and RING finger protein 3 (759 aa).

Residues 1 to 69 (MESVRIEQML…PGTSTPESKV (69 aa)) form a disordered region. Residues 57–66 (EQSPGTSTPE) show a composition bias toward polar residues. The TPR 1 repeat unit spans residues 67-100 (SKVLLTQADALASRGRIREALEVYRQLSERQQLV). The RING-type 1 zinc-finger motif lies at 158 to 196 (CRKCHGFLSDPVSLSCGHTFCKLCLERGRAADRRCALCG). TPR repeat units follow at residues 243-276 (ASQLRHEGNRLYRERQVEAALLKYNEAVKLAPND), 278-310 (LLYSNRSQIYFTLESHENALHDAEIACKLRPMG), and 312-344 (KAHFRKAQALATLGKVEEALREFLYCVSLDGKN). The tract at residues 360–454 (HCSSQEEAAA…TDQGDKPALS (95 aa)) is disordered. Positions 380-393 (AKVKGDGQQHHMKD) are enriched in basic and acidic residues. The RING-type 2 zinc-finger motif lies at 467–505 (CALCMRLFYEPVTTPCGHTFCLKCLERCLDHNAKCPLCK). The Lon N-terminal domain occupies 546–755 (MEELSNLNKN…GIRRVLAFIS (210 aa)).

The polypeptide is LON peptidase N-terminal domain and RING finger protein 3 (LONRF3) (Homo sapiens (Human)).